A 511-amino-acid polypeptide reads, in one-letter code: ATP synthase subunit alpha (511 aa).

169–176 (GDRQTGKT) is an ATP binding site.

The protein belongs to the ATPase alpha/beta chains family. As to quaternary structure, F-type ATPases have 2 components, CF(1) - the catalytic core - and CF(0) - the membrane proton channel. CF(1) has five subunits: alpha(3), beta(3), gamma(1), delta(1), epsilon(1). CF(0) has three main subunits: a(1), b(2) and c(9-12). The alpha and beta chains form an alternating ring which encloses part of the gamma chain. CF(1) is attached to CF(0) by a central stalk formed by the gamma and epsilon chains, while a peripheral stalk is formed by the delta and b chains.

The protein localises to the cell inner membrane. It carries out the reaction ATP + H2O + 4 H(+)(in) = ADP + phosphate + 5 H(+)(out). Its function is as follows. Produces ATP from ADP in the presence of a proton gradient across the membrane. The alpha chain is a regulatory subunit. The polypeptide is ATP synthase subunit alpha (Bartonella henselae (strain ATCC 49882 / DSM 28221 / CCUG 30454 / Houston 1) (Rochalimaea henselae)).